Consider the following 188-residue polypeptide: Ribosome-recycling factor (188 aa).

The protein belongs to the RRF family.

It localises to the cytoplasm. Its function is as follows. Responsible for the release of ribosomes from messenger RNA at the termination of protein biosynthesis. May increase the efficiency of translation by recycling ribosomes from one round of translation to another. This chain is Ribosome-recycling factor, found in Anaeromyxobacter dehalogenans (strain 2CP-1 / ATCC BAA-258).